Reading from the N-terminus, the 477-residue chain is uncharacterized protein (477 aa).

Residues 1 to 18 (MWTALVLVWISSVPLSRS) form the signal peptide. Over 19 to 427 (HTVPAVPRHL…DPLTPSLVNK (409 aa)) the chain is Extracellular. 3 N-linked (GlcNAc...) asparagine glycosylation sites follow: asparagine 40, asparagine 51, and asparagine 77. Disordered stretches follow at residues 79 to 103 (TRVTAETTPHGTNTSTPTTREGTAD), 239 to 366 (GTIN…TGGP), and 378 to 398 (KATAGTASAGPTSRSSGDVKV). The segment covering 85–97 (TTPHGTNTSTPTT) has biased composition (low complexity). 2 stretches are compositionally biased toward polar residues: residues 253–288 (PAKSTPTNTSSRNPIPTSGAQTQGTTIQVTTDQPVH) and 298–309 (PSNTTLEPNTPK). Asparagine 300 carries N-linked (GlcNAc...) asparagine glycosylation. Low complexity-rich tracts occupy residues 310–326 (SVASTSSAVVTTTQVQT), 348–361 (TSPTTQPSPLLPTQ), and 378–393 (KATAGTASAGPTSRSS). The helical transmembrane segment at 428–448 (MFLLVVLIVGVTLFIAVLMMF) threads the bilayer. The Cytoplasmic segment spans residues 449-477 (ALQAYESYKKKDYTQVDYLINGMYADSEM).

The protein resides in the cell membrane. It localises to the golgi apparatus. Its subcellular location is the trans-Golgi network membrane. This is an uncharacterized protein from Rattus norvegicus (Rat).